The primary structure comprises 106 residues: Cuticle protein CP14.6 (106 aa).

Positions 1–16 (MKSFFVVALLVAAAAA) are cleaved as a signal peptide. One can recognise a Chitin-binding type R&amp;R domain in the interval 37–106 (PQHYSYSVET…PQGAHLPVAA (70 aa)).

Its function is as follows. Component of the cuticle of tobacco hornworm. The polypeptide is Cuticle protein CP14.6 (CP14.6) (Manduca sexta (Tobacco hawkmoth)).